Reading from the N-terminus, the 228-residue chain is 6-carboxyhexanoate--CoA ligase (228 aa).

This sequence belongs to the BioW family. In terms of assembly, homodimer. Requires Mg(2+) as cofactor.

It catalyses the reaction heptanedioate + ATP + CoA = 6-carboxyhexanoyl-CoA + AMP + diphosphate. It functions in the pathway metabolic intermediate metabolism; pimeloyl-CoA biosynthesis; pimeloyl-CoA from pimelate: step 1/1. In terms of biological role, catalyzes the transformation of pimelate into pimeloyl-CoA with concomitant hydrolysis of ATP to AMP. The protein is 6-carboxyhexanoate--CoA ligase of Staphylococcus epidermidis (strain ATCC 35984 / DSM 28319 / BCRC 17069 / CCUG 31568 / BM 3577 / RP62A).